Here is a 340-residue protein sequence, read N- to C-terminus: Adenosine deaminase (340 aa).

Positions 15 and 17 each coordinate Zn(2+). His-17, Asp-19, and Gly-172 together coordinate substrate. His-199 serves as a coordination point for Zn(2+). Glu-202 acts as the Proton donor in catalysis. Residue Asp-279 participates in Zn(2+) binding.

The protein belongs to the metallo-dependent hydrolases superfamily. Adenosine and AMP deaminases family. Adenosine deaminase subfamily. Zn(2+) serves as cofactor.

The catalysed reaction is adenosine + H2O + H(+) = inosine + NH4(+). It catalyses the reaction 2'-deoxyadenosine + H2O + H(+) = 2'-deoxyinosine + NH4(+). In terms of biological role, catalyzes the hydrolytic deamination of adenosine and 2-deoxyadenosine. In Streptococcus agalactiae serotype III (strain NEM316), this protein is Adenosine deaminase.